Here is a 159-residue protein sequence, read N- to C-terminus: MAVININEVITHLLPGQTIAGLDLGKKTIGIAVSDRGLTFSNPRSVLQRKKLTVDARTLIQIFDRENVGVVIIGLPLNMNGSSGPRAQATRTFVNNMEAYTEIPFVFWDERLSTIAAERSLLEMDVSRAKRATRIDSAAAAFILQGALNRIQNLHYMEG.

Belongs to the YqgF nuclease family.

The protein localises to the cytoplasm. Functionally, could be a nuclease involved in processing of the 5'-end of pre-16S rRNA. This Bartonella quintana (strain Toulouse) (Rochalimaea quintana) protein is Putative pre-16S rRNA nuclease.